The following is a 544-amino-acid chain: E3 ubiquitin-protein ligase makorin-3 (544 aa).

2 disordered regions span residues 1–46 (MEES…VSSA) and 117–144 (DLSG…KMAT). 2 stretches are compositionally biased toward low complexity: residues 9 to 19 (EAHAAAGAEAG) and 36 to 46 (AAGASAGVSSA). 2 consecutive C3H1-type zinc fingers follow at residues 92 to 119 (WTKQ…HDLS) and 274 to 301 (PMPL…HGEI). Residues 302–329 (CDMCGQQALHPWDAAQQEAHRRACVEAH) form a makorin-type Cys-His region. Residues 347–401 (CGICMEVVYEKADPSDRRFGILFSCNHTYCLRCIRRWRSATQFENRISKSCPQCR) form an RING-type zinc finger. A C3H1-type 3 zinc finger spans residues 430–459 (GMSQKACRYFAGGLGHCPFGEFCFYKHEYP).

Mainly expressed in mouse brain and reproductive system including testis and ovary. Ubiquitously detected at low levels throughout the entire embryo, but expression is highest in the ventricular layers of the brain.

It localises to the nucleus. It carries out the reaction S-ubiquitinyl-[E2 ubiquitin-conjugating enzyme]-L-cysteine + [acceptor protein]-L-lysine = [E2 ubiquitin-conjugating enzyme]-L-cysteine + N(6)-ubiquitinyl-[acceptor protein]-L-lysine.. It functions in the pathway protein modification; protein ubiquitination. E3 ubiquitin ligase catalyzing the covalent attachment of ubiquitin moieties onto substrate proteins. Acts as a key developmental timer that helps ensure puberty begins at the appropriate age, by inhibiting premature activation of the reproductive hormone cascade. Epigenetically regulates GNRH1 transcription by disrupting the binding of methyl-DNA binding protein 3/MBD3 to the promoter of GNRH1. Mechanistically, mediates the non-proteolytic ubiquitination of MBD3 at multiple sites with 'Lys27' ubiquitin linkages and thereby regulates the methylation status of the genome, including GNRH1 promoter. Modulates the stability and translation of GNRH1 mRNA by mediating the non-proteolytic ubiquitination of PABP family members PABPC1, PABPC3 and PABPC4 at multiple sites. Also participates in the maintenance of genomic and epigenomic stability by regulating the abundance of APEX2 via 'Lys-48'-linked ubiquitination. This Mus musculus (Mouse) protein is E3 ubiquitin-protein ligase makorin-3 (Mkrn3).